The primary structure comprises 298 residues: Probable GTP 3',8-cyclase (298 aa).

Residues R4–R221 form the Radical SAM core domain. Residue R13 coordinates GTP. Residues C20 and C24 each contribute to the [4Fe-4S] cluster site. Residue Y26 participates in S-adenosyl-L-methionine binding. C27 serves as a coordination point for [4Fe-4S] cluster. K61 contacts GTP. G65 contributes to the S-adenosyl-L-methionine binding site. Residue T91 coordinates GTP. Residue S115 coordinates S-adenosyl-L-methionine. K152 is a GTP binding site. [4Fe-4S] cluster contacts are provided by C243 and C246. R248–R250 lines the GTP pocket. C260 serves as a coordination point for [4Fe-4S] cluster.

Belongs to the radical SAM superfamily. MoaA family. [4Fe-4S] cluster serves as cofactor.

The enzyme catalyses GTP + AH2 + S-adenosyl-L-methionine = (8S)-3',8-cyclo-7,8-dihydroguanosine 5'-triphosphate + 5'-deoxyadenosine + L-methionine + A + H(+). It functions in the pathway cofactor biosynthesis; molybdopterin biosynthesis. Its function is as follows. Catalyzes the cyclization of GTP to (8S)-3',8-cyclo-7,8-dihydroguanosine 5'-triphosphate. In Methanococcus maripaludis (strain C7 / ATCC BAA-1331), this protein is Probable GTP 3',8-cyclase.